The primary structure comprises 182 residues: Doublesex- and mab-3-related transcription factor C1 (182 aa).

Threonine 15 is modified (phosphoserine). The span at 26–39 (AQVDTATQEESSQG) shows a compositional bias: polar residues. Disordered stretches follow at residues 26-48 (AQVD…QHPE) and 136-174 (QTRH…PSGH).

This sequence belongs to the DMRT family. Expressed in Sertoli cells in male testis.

This is Doublesex- and mab-3-related transcription factor C1 (Dmrtc1) from Mus musculus (Mouse).